Reading from the N-terminus, the 537-residue chain is Glucocorticoid-induced transcript 1 protein (537 aa).

Disordered stretches follow at residues 1-45 and 62-254; these read MSTA…APAA and LLRG…HGNH. Phosphoserine occurs at positions 69, 96, 98, and 99. Residues 69-86 are compositionally biased toward low complexity; sequence SPTRPAAAATAAAALGSL. Pro residues predominate over residues 97-106; it reads PSSPTPPPAA. Thr-101 is modified (phosphothreonine). Basic and acidic residues predominate over residues 121-136; it reads RSPESRRRSSSPERRS. Positions 152–168 are enriched in low complexity; it reads IRTSSTIRRTSSLDTIT. A phosphoserine mark is found at Ser-162 and Ser-163. 2 positions are modified to phosphothreonine: Thr-166 and Thr-168. Residues 178 to 192 are compositionally biased toward basic and acidic residues; it reads RDPHVHYPSCMRDKA. Ser-214 is subject to Phosphoserine. Positions 217–244 form a coiled coil; that stretch reads SADQLKEIAKLRQQLQRSKQSSRHSKEK. Phosphoserine is present on Ser-248. Position 256 is a phosphothreonine (Thr-256). Ser-293 is subject to Phosphoserine. A compositionally biased stretch (basic and acidic residues) spans 309–321; the sequence is EVSKPLDIPDGRR. The segment at 309–407 is disordered; sequence EVSKPLDIPD…KPNNSYMFKR (99 aa). Positions 329–346 are enriched in polar residues; the sequence is RSSSTRSIDTQTPSVQER. Thr-333 is subject to Phosphothreonine. Phosphoserine is present on Ser-335. The residue at position 340 (Thr-340) is a Phosphothreonine. The segment covering 347-359 has biased composition (low complexity); sequence SSSCSSHSPCVSP. Phosphoserine is present on residues Ser-384, Ser-388, Ser-396, Ser-402, and Ser-470. Residues 495–520 form a disordered region; the sequence is SLSDDTSTADSLEPSAQQPSQQQQLL.

As to expression, predominantly expressed in thymus and testis, especially in CD4+CD8+ cells and at specific stages of spermatogenesis.

This Mus musculus (Mouse) protein is Glucocorticoid-induced transcript 1 protein (Glcci1).